A 373-amino-acid polypeptide reads, in one-letter code: Mannan endo-1,4-beta-mannosidase A (373 aa).

A signal peptide spans 1–17 (MKGLFAFGLGLLSLVNA). Residues Trp-81, Asn-193, and 194-196 (EPR) contribute to the substrate site. The Proton donor/acceptor role is filled by Glu-194. A disulfide bond links Cys-197 and Cys-200. Substrate-binding residues include Glu-230, Tyr-267, and Trp-271. A disulfide bond links Cys-289 and Cys-296. Residue Glu-300 is the Nucleophile of the active site. Cys-308 and Cys-359 form a disulfide bridge. Trp-332 serves as a coordination point for substrate.

Belongs to the glycosyl hydrolase 5 (cellulase A) family. Monomer. Not glycosylated.

The protein resides in the secreted. The enzyme catalyses Random hydrolysis of (1-&gt;4)-beta-D-mannosidic linkages in mannans, galactomannans and glucomannans.. Its function is as follows. Endo-1,4-mannanase that catalyzes the random hydrolysis of (1-&gt;4)-beta-D-mannosidic linkages in mannans and heteromannans. It is a crucial enzyme for depolymerization of seed galactomannans and wood galactoglucomannans. Hydrolyzes structurally different mannan polysaccharides, such as galactomannans, glucomannans, and beta-1,4-mannans from different sources, yielding principally mannobiose. Also has transglycosylation activity. This chain is Mannan endo-1,4-beta-mannosidase A, found in Podospora anserina (strain S / ATCC MYA-4624 / DSM 980 / FGSC 10383) (Pleurage anserina).